A 241-amino-acid chain; its full sequence is L-aspartate dehydrogenase (241 aa).

NAD(+)-binding positions include 10–11 (NI), Asp28, 56–57 (AS), 63–64 (EY), 78–79 (IS), Ala109, and Asn164. The active site involves His193.

The protein belongs to the L-aspartate dehydrogenase family. As to quaternary structure, homodimer.

It catalyses the reaction L-aspartate + NADP(+) + H2O = oxaloacetate + NH4(+) + NADPH + H(+). The catalysed reaction is L-aspartate + NAD(+) + H2O = oxaloacetate + NH4(+) + NADH + H(+). It participates in cofactor biosynthesis; NAD(+) biosynthesis; iminoaspartate from L-aspartate (dehydrogenase route): step 1/1. Its activity is regulated as follows. Competitively inhibited by L-malate and NH(4)(+). Specifically catalyzes the NAD or NADP-dependent dehydrogenation of L-aspartate to iminoaspartate. Does not show aspartate oxidase activity. Is also able to catalyze the reverse reaction, i.e. the reductive amination of oxaloacetate. The chain is L-aspartate dehydrogenase from Thermotoga maritima (strain ATCC 43589 / DSM 3109 / JCM 10099 / NBRC 100826 / MSB8).